The chain runs to 300 residues: ETS homologous factor (300 aa).

The 87-residue stretch at 29–115 folds into the PNT domain; sequence STCNVSSGFF…SNLQHLKWNG (87 aa). Residues 183–202 form a disordered region; the sequence is ESPDMKKEQDPPAKCHTKKH. Basic and acidic residues predominate over residues 185-195; sequence PDMKKEQDPPA. Residues 207 to 289 constitute a DNA-binding region (ETS); that stretch reads THLWEFIRDI…DGRRLVYKFG (83 aa).

It belongs to the ETS family.

It is found in the nucleus. Transcriptional activator that may play a role in regulating epithelial cell differentiation and proliferation. May act as a repressor for a specific subset of ETS/AP-1-responsive genes, and as a modulator of the nuclear response to mitogen-activated protein kinase signaling cascades. Binds to DNA sequences containing the consensus nucleotide core sequence GGAA. Involved in regulation of TNFRSF10B/DR5 expression through Ets-binding sequences on the TNFRSF10B/DR5 promoter. The protein is ETS homologous factor (EHF) of Pan troglodytes (Chimpanzee).